Reading from the N-terminus, the 285-residue chain is Methionine aminopeptidase 2 (285 aa).

His114 is a binding site for substrate. The a divalent metal cation site is built by Asp131, Asp142, and His205. Residue His212 participates in substrate binding. A divalent metal cation contacts are provided by Glu238 and Glu269.

As to quaternary structure, monomer. Requires Co(2+) as cofactor. Zn(2+) is required as a cofactor. The cofactor is Mn(2+). It depends on Fe(2+) as a cofactor.

It carries out the reaction Release of N-terminal amino acids, preferentially methionine, from peptides and arylamides.. Inhibited by bengamide derivatives and by various metalloform-selective inhibitors. Removes the N-terminal methionine from nascent proteins. The N-terminal methionine is often cleaved when the second residue in the primary sequence is small and uncharged (Met-Ala-, Cys, Gly, Pro, Ser, Thr, or Val). Requires deformylation of the N(alpha)-formylated initiator methionine before it can be hydrolyzed. The polypeptide is Methionine aminopeptidase 2 (Mycobacterium tuberculosis (strain ATCC 25618 / H37Rv)).